Reading from the N-terminus, the 511-residue chain is Acetylcholine receptor subunit alpha-type unc-38 (511 aa).

The signal sequence occupies residues 1-16 (MRSFWLFLLLLLFCIS). The Extracellular segment spans residues 17-261 (FIKLTEGNED…QLRRKPLFYT (245 aa)). Asn-124 is a glycosylation site (N-linked (GlcNAc...) asparagine). Cys-151 and Cys-165 are joined by a disulfide. N-linked (GlcNAc...) asparagine glycosylation occurs at Asn-202. Cys-238 and Cys-239 are disulfide-bonded. The next 3 helical transmembrane spans lie at 262–282 (VNLVFPCVGISFLTILVFYLP), 291–311 (LCISILVALTIFFLLLTEIIP), and 324–344 (LLFTMVMVTLSVVVTVISLNL). Residues 345 to 464 (HFRTPTTHLM…WKYVAMVLDR (120 aa)) lie on the Cytoplasmic side of the membrane. Residues 465-485 (LFLLIFSIACFVGTVIILLRA) form a helical membrane-spanning segment.

Belongs to the ligand-gated ion channel (TC 1.A.9) family. Acetylcholine receptor (TC 1.A.9.1) subfamily. As to quaternary structure, component of nicotinic acetylcholine receptor. In muscles, composed of 2 non-alpha subunits lev-1 and unc-29, and 3 alpha subunits unc-38, unc-63 and lev-8. In cholinergic motoneurons, composed of 2 non-alpha subunits acr-2 and acr-3, and 3 alpha subunits unc-38, unc-63 and acr-12.

It is found in the postsynaptic cell membrane. The protein resides in the cell membrane. In terms of biological role, alpha subunit of nicotinic acetylcholine receptor (nAChR). Probably acts in cholinergic motoneurons to regulate presynaptic neurotransmitter release, thereby ensuring normal level of excitation of cholinergic motoneurons during locomotion. Involved in nAChR sensitivity to nicotine. This is Acetylcholine receptor subunit alpha-type unc-38 (unc-38) from Caenorhabditis elegans.